We begin with the raw amino-acid sequence, 190 residues long: Thiamine biosynthesis protein X (190 aa).

Positions 1–22 are cleaved as a signal peptide; the sequence is MSISRTVFGIAATAALSAALVA. Cys-23 carries the N-palmitoyl cysteine lipid modification. Cys-23 carries S-diacylglycerol cysteine lipidation. The segment at 43–68 is disordered; it reads SQNPTSASSTSTSSATTTSSAPVEED. Residues 47–63 are compositionally biased toward low complexity; the sequence is TSASSTSTSSATTTSSA.

It is found in the cell membrane. Is necessary for biosynthesis of the 4-methyl-5-(beta-hydroxyethyl)thiazol component from which thiamine is formed. The polypeptide is Thiamine biosynthesis protein X (thiX) (Corynebacterium glutamicum (strain ATCC 13032 / DSM 20300 / JCM 1318 / BCRC 11384 / CCUG 27702 / LMG 3730 / NBRC 12168 / NCIMB 10025 / NRRL B-2784 / 534)).